A 185-amino-acid chain; its full sequence is Translocon-associated protein subunit gamma (185 aa).

Met1 carries the N-acetylmethionine modification. Residues 1–27 lie on the Lumenal side of the membrane; sequence MAPKGSCKQQSEEDLLLQDFSRNLSAK. Position 11 is a phosphoserine (Ser11). Residues 28–48 form a helical membrane-spanning segment; sequence SSALFFGNAFIVSAIPIWLYW. Residues 49–54 lie on the Cytoplasmic side of the membrane; it reads RIWHMD. Residues 55–76 traverse the membrane as a helical segment; sequence LIQSAVLYSVMTLVSTYLVAFA. Over 77 to 135 the chain is Lumenal; sequence YKNVKFVLKHKVAQKREDAVSKEVTRKLSEADNRKMSRKEKDERILWKKNEVADYEATT. The residue at position 105 (Ser105) is a Phosphoserine. The helical transmembrane segment at 136-157 threads the bilayer; that stretch reads FSIFYNNTLFLVVVIVASFFIL. At 158–163 the chain is on the cytoplasmic side; it reads KNFNPT. The helical transmembrane segment at 164–184 threads the bilayer; sequence VNYILSISASSGLIALLSTGS.

The protein belongs to the TRAP-gamma family. In terms of assembly, heterotetramer of TRAP-alpha, TRAP-beta, TRAP-delta and TRAP-gamma.

The protein resides in the endoplasmic reticulum membrane. Functionally, TRAP proteins are part of a complex whose function is to bind calcium to the ER membrane and thereby regulate the retention of ER resident proteins. The chain is Translocon-associated protein subunit gamma (SSR3) from Pongo abelii (Sumatran orangutan).